The primary structure comprises 1314 residues: Phosphoribosylformylglycinamidine synthase (1314 aa).

Residues Gly307–Asp318 and Ala674 each bind ATP. Mg(2+)-binding residues include Asp675, Glu714, Asn718, and Asp880. Position 882 (Ser882) interacts with ATP. Residues Ile1063–Gly1314 form the Glutamine amidotransferase type-1 domain. The Nucleophile role is filled by Cys1156. Residues His1279 and Glu1281 contribute to the active site.

This sequence in the N-terminal section; belongs to the FGAMS family. In terms of assembly, monomer.

It localises to the cytoplasm. The enzyme catalyses N(2)-formyl-N(1)-(5-phospho-beta-D-ribosyl)glycinamide + L-glutamine + ATP + H2O = 2-formamido-N(1)-(5-O-phospho-beta-D-ribosyl)acetamidine + L-glutamate + ADP + phosphate + H(+). It participates in purine metabolism; IMP biosynthesis via de novo pathway; 5-amino-1-(5-phospho-D-ribosyl)imidazole from N(2)-formyl-N(1)-(5-phospho-D-ribosyl)glycinamide: step 1/2. In terms of biological role, phosphoribosylformylglycinamidine synthase involved in the purines biosynthetic pathway. Catalyzes the ATP-dependent conversion of formylglycinamide ribonucleotide (FGAR) and glutamine to yield formylglycinamidine ribonucleotide (FGAM) and glutamate. This chain is Phosphoribosylformylglycinamidine synthase, found in Neisseria gonorrhoeae (strain ATCC 700825 / FA 1090).